The primary structure comprises 6885 residues: Nesprin-2 (6885 aa).

The segment at Met-1–Lys-286 is actin-binding. The Cytoplasmic segment spans residues Met-1–Arg-6834. Calponin-homology (CH) domains are found at residues Asp-31–His-136 and Met-181–Lys-286. Spectrin repeat units follow at residues Gly-297–Asn-378, Ala-379–Asn-472, Ile-473–Tyr-575, Asn-576–Gln-680, Val-735–Thr-838, Asp-839–Glu-932, and Leu-933–Ser-1034. The stretch at Gly-297–Glu-6782 forms a coiled coil. Ser-841 carries the phosphoserine modification. At Lys-955 the chain carries N6-acetyllysine. The segment covering Pro-1042–Asn-1059 has biased composition (polar residues). Residues Pro-1042–Glu-1084 are disordered. Spectrin repeat units follow at residues Thr-1121–Thr-1212, Asn-1263–Lys-1323, Ala-1324–Gln-1419, Glu-1420–Thr-1524, Glu-1525–Asp-1636, Tyr-1637–Ser-1738, Asn-1739–Ser-1830, Val-1831–Leu-1938, Glu-1939–Asp-2036, Lys-2037–Thr-2132, Tyr-2133–Asn-2243, and Leu-2244–Ile-2360. The span at Glu-2368–Ala-2382 shows a compositional bias: basic and acidic residues. Positions Glu-2368–Ala-2394 are disordered. Residues Thr-2383–Ser-2393 show a composition bias toward polar residues. Spectrin repeat units follow at residues Asp-2432–Lys-2513, Asn-2514–Gln-2620, Gln-2621–Glu-2717, Pro-2718–Phe-2831, Lys-2832–Asn-2933, Thr-2934–Lys-3036, Gln-3037–Leu-3142, Glu-3143–Thr-3248, Asn-3249–Thr-3352, Glu-3353–Glu-3465, Glu-3466–Lys-3573, Asn-3574–Val-3679, Leu-3680–Thr-3777, Ser-3778–Glu-3880, Ser-3881–Glu-3986, and Gln-3987–Val-4086. Ser-2781 is subject to Phosphoserine. Basic and acidic residues-rich tracts occupy residues Gln-4073–Leu-4083 and Val-4093–Lys-4102. 4 disordered regions span residues Gln-4073–Ile-4162, Asp-4184–Pro-4232, Glu-4335–Leu-4363, and His-4416–Asn-4448. The residue at position 4108 (Ser-4108) is a Phosphoserine. Basic and acidic residues-rich tracts occupy residues Ser-4122–Glu-4134 and Trp-4144–Ala-4155. A Spectrin 36 repeat occupies Lys-4229–Lys-4348. Positions Glu-4335–Glu-4356 are enriched in basic and acidic residues. Polar residues predominate over residues Thr-4421–Glu-4434. 17 Spectrin repeats span residues Asn-4520 to Gln-4639, Asn-4640 to Tyr-4727, Thr-4728 to Leu-4837, Gln-4838 to Leu-4943, Lys-4944 to Leu-5051, His-5052 to His-5164, Leu-5165 to Asn-5266, Gln-5267 to Ser-5391, Asn-5392 to Val-5487, Lys-5488 to Leu-5589, Gln-5590 to Asp-5704, Phe-5705 to Ala-5799, Glu-5800 to Ile-5907, Arg-5908 to Leu-6017, Lys-6018 to Trp-6135, Arg-6136 to Phe-6243, and Thr-6244 to Glu-6355. Ser-5785 is subject to Phosphoserine. The span at Leu-6354–Met-6367 shows a compositional bias: acidic residues. Positions Leu-6354 to Arg-6508 are disordered. 7 positions are modified to phosphoserine: Ser-6361, Ser-6384, Ser-6411, Ser-6428, Ser-6429, Ser-6430, and Ser-6459. Residues Glu-6368–Ser-6384 are compositionally biased toward basic and acidic residues. Spectrin repeat units follow at residues Ser-6461–Ile-6549, Lys-6550–Asp-6665, and Phe-6666–Glu-6782. Residues Pro-6463 to Arg-6474 are compositionally biased toward basic and acidic residues. The segment covering Pro-6477–Pro-6489 has biased composition (pro residues). The segment covering Pro-6490–Gly-6499 has biased composition (low complexity). Positions Gly-6769 to Pro-6824 are disordered. Residues Arg-6826–Thr-6885 form the KASH domain. Residues Ala-6835–Ser-6855 traverse the membrane as a helical; Anchor for type IV membrane protein segment. Topologically, residues Ser-6856–Thr-6885 are perinuclear space. Residues Phe-6872 to Thr-6885 are sufficient for interaction with SUN2.

Belongs to the nesprin family. In terms of assembly, core component of LINC complexes which are composed of inner nuclear membrane SUN domain-containing proteins coupled to outer nuclear membrane KASH domain-containing nesprins. SUN and KASH domain-containing proteins seem to bind each other promiscuously; however, some LINC complex constituents are tissue- or cell type-specific. At least SUN1/2-containing core LINC complexes are proposed to be hexameric composed of three protomers of each KASH and SUN domain-containing protein. The SUN2:SYNE2/KASH2 complex is a heterohexamer; the homotrimeric cloverleave-like conformation of the SUN domain is a prerequisite for LINC complex formation in which three separate SYNE2/KASH2 peptides bind at the interface of adjacent SUN domains. Interacts with EMD, LMNA, MKS3 and F-actin via its N-terminal domain. Interacts with DCTN1 and DYNC1I1/2; suggesting the association with the dynein-dynactin motor complex. Associates with kinesin motor complexes. Interacts with TMEM67. Interacts (via KASH domain) with TMEM258. Interacts with BROX; this interaction promotes SYN2 ubiquitination and facilitates the relaxation of mechanical stress imposed by compressive actin fibers at the rupture site. The disulfid bond with SUN2 is required for stability of the SUN2:SYNE2/KASH2 LINC complex under tensile forces though not required for the interaction. Post-translationally, ubiquitinated, targeting it for degradation. Widely expressed, with higher level in kidney, adult and fetal liver, stomach and placenta. Weakly expressed in skeletal muscle and brain. Isoform 5 is highly expressed in pancreas, skeletal muscle and heart.

Its subcellular location is the nucleus outer membrane. It is found in the sarcoplasmic reticulum membrane. It localises to the cell membrane. The protein localises to the cytoplasm. The protein resides in the cytoskeleton. Its subcellular location is the mitochondrion. It is found in the nucleus. It localises to the nucleoplasm. The protein localises to the myofibril. The protein resides in the sarcomere. Its subcellular location is the z line. It is found in the cell junction. It localises to the focal adhesion. Its function is as follows. Multi-isomeric modular protein which forms a linking network between organelles and the actin cytoskeleton to maintain the subcellular spatial organization. As a component of the LINC (LInker of Nucleoskeleton and Cytoskeleton) complex involved in the connection between the nuclear lamina and the cytoskeleton. The nucleocytoplasmic interactions established by the LINC complex play an important role in the transmission of mechanical forces across the nuclear envelope and in nuclear movement and positioning. Specifically, SYNE2 and SUN2 assemble in arrays of transmembrane actin-associated nuclear (TAN) lines which are bound to F-actin cables and couple the nucleus to retrograde actin flow during actin-dependent nuclear movement. May be involved in nucleus-centrosome attachment. During interkinetic nuclear migration (INM) at G2 phase and nuclear migration in neural progenitors its LINC complex association with SUN1/2 and probable association with cytoplasmic dynein-dynactin motor complexes functions to pull the nucleus toward the centrosome; SYNE1 and SYNE2 may act redundantly. During INM at G1 phase mediates respective LINC complex association with kinesin to push the nucleus away from the centrosome. Involved in nuclear migration in retinal photoreceptor progenitors. Required for centrosome migration to the apical cell surface during early ciliogenesis. Facilitates the relaxation of mechanical stress imposed by compressive actin fibers at the rupture site through its nteraction with SYN2. This is Nesprin-2 from Homo sapiens (Human).